The chain runs to 82 residues: Large ribosomal subunit protein bL31B (82 aa).

This sequence belongs to the bacterial ribosomal protein bL31 family. Type B subfamily. As to quaternary structure, part of the 50S ribosomal subunit.

The protein is Large ribosomal subunit protein bL31B of Pectobacterium carotovorum subsp. carotovorum (strain PC1).